We begin with the raw amino-acid sequence, 487 residues long: Glutamyl-tRNA(Gln) amidotransferase subunit A (487 aa).

Catalysis depends on charge relay system residues lysine 79 and serine 158. The active-site Acyl-ester intermediate is the serine 182.

The protein belongs to the amidase family. GatA subfamily. As to quaternary structure, heterotrimer of A, B and C subunits.

The catalysed reaction is L-glutamyl-tRNA(Gln) + L-glutamine + ATP + H2O = L-glutaminyl-tRNA(Gln) + L-glutamate + ADP + phosphate + H(+). In terms of biological role, allows the formation of correctly charged Gln-tRNA(Gln) through the transamidation of misacylated Glu-tRNA(Gln) in organisms which lack glutaminyl-tRNA synthetase. The reaction takes place in the presence of glutamine and ATP through an activated gamma-phospho-Glu-tRNA(Gln). The protein is Glutamyl-tRNA(Gln) amidotransferase subunit A of Ehrlichia canis (strain Jake).